Reading from the N-terminus, the 364-residue chain is Lytic cellulose monooxygenase (364 aa).

Positions 1 to 34 (MARRSRYISLAAVMATLLSALGVTFLLGQGRAEA) are cleaved as a signal peptide. Cu cation is bound by residues H35 and H144. One can recognise a Chitin-binding type-4 domain in the interval 35–225 (HGVAMMPGSR…QENFFSCSDV (191 aa)). The disordered stretch occupies residues 234-261 (VTGIRGSGGTPTPTPTPTTPPTTPPPTH). The span at 245–260 (TPTPTPTTPPTTPPPT) shows a compositional bias: pro residues. In terms of domain architecture, CBM2 spans 258-364 (PPTHSGSCMA…PVGTIGCVAP (107 aa)).

Cu(2+) is required as a cofactor.

It localises to the secreted. The catalysed reaction is [(1-&gt;4)-beta-D-glucosyl]n+m + reduced acceptor + O2 = [(1-&gt;4)-beta-D-glucosyl]m-1-(1-&gt;4)-D-glucono-1,5-lactone + [(1-&gt;4)-beta-D-glucosyl]n + acceptor + H2O.. It functions in the pathway glycan metabolism; cellulose degradation. Its function is as follows. Involved in the degradation of lignocellulosic biomass. Catalyzes the oxidative cleavage of glycosidic bonds in cellulosic substrates via a copper-dependent mechanism. Degrades phosphoric acid swollen cellulose (PASC) to oxidized cellooligosaccharides with degrees of polymerization of 4-8. Also shows activity on agricultural fiber paper pulps such as flax pulp. Is not active on chitin. The polypeptide is Lytic cellulose monooxygenase (Streptomyces ambofaciens (strain ATCC 23877 / 3486 / DSM 40053 / JCM 4204 / NBRC 12836 / NRRL B-2516)).